We begin with the raw amino-acid sequence, 155 residues long: 3-hydroxyacyl-[acyl-carrier-protein] dehydratase FabZ (155 aa).

Residue histidine 57 is part of the active site.

The protein belongs to the thioester dehydratase family. FabZ subfamily.

Its subcellular location is the cytoplasm. It carries out the reaction a (3R)-hydroxyacyl-[ACP] = a (2E)-enoyl-[ACP] + H2O. Involved in unsaturated fatty acids biosynthesis. Catalyzes the dehydration of short chain beta-hydroxyacyl-ACPs and long chain saturated and unsaturated beta-hydroxyacyl-ACPs. The sequence is that of 3-hydroxyacyl-[acyl-carrier-protein] dehydratase FabZ from Cereibacter sphaeroides (strain ATCC 17025 / ATH 2.4.3) (Rhodobacter sphaeroides).